Here is a 92-residue protein sequence, read N- to C-terminus: Large ribosomal subunit protein eL43 (92 aa).

The C4-type zinc finger occupies cysteine 39 to cysteine 60.

The protein belongs to the eukaryotic ribosomal protein eL43 family.

In Gossypium hirsutum (Upland cotton), this protein is Large ribosomal subunit protein eL43 (RPL37A).